Consider the following 554-residue polypeptide: Rab GTPase-binding effector protein 2 (554 aa).

Disordered regions lie at residues 1–28, 167–208, and 371–395; these read MAAAPATLALDPQPQEKQKDASESSELS, IQRR…GPAA, and GLRAEQLPSSALQGSEQREDQDEAL. Residues 14–28 show a composition bias toward basic and acidic residues; sequence PQEKQKDASESSELS. The stretch at 15–173 forms a coiled coil; that stretch reads QEKQKDASES…IQEIQRRPRQ (159 aa). 4 positions are modified to phosphoserine: Ser176, Ser180, Ser187, and Ser191. Residues 274–509 adopt a coiled-coil conformation; that stretch reads DSQWEQLQVE…QAELETSEQV (236 aa).

It belongs to the rabaptin family. As to quaternary structure, heterodimer with RABGEF1. The dimer binds RAB5A that has been activated by GTP-binding. Interacts with SDCCAG8; this interaction is important for ciliogenesis regulation. Interacts with RAB4A; this interaction may mediate VEGFR2 cell surface expression.

It localises to the cytoplasm. It is found in the early endosome. The protein resides in the cytoskeleton. The protein localises to the microtubule organizing center. Its subcellular location is the centrosome. It localises to the cilium basal body. In terms of biological role, plays a role in membrane trafficking and in homotypic early endosome fusion. Participates in arteriogenesis by regulating vascular endothelial growth factor receptor 2/VEGFR2 cell surface expression and endosomal trafficking. By interacting with SDCCAG8, localizes to centrosomes and plays a critical role in ciliogenesis. The chain is Rab GTPase-binding effector protein 2 (Rabep2) from Mus musculus (Mouse).